Reading from the N-terminus, the 350-residue chain is Alcohol dehydrogenase 1 (350 aa).

Positions 46, 69, 100, 103, 106, 114, and 156 each coordinate Zn(2+). Residues 180-186 (GAAGGLG), Asp-204, Lys-209, 271-273 (VGL), and Arg-343 contribute to the NAD(+) site.

It belongs to the zinc-containing alcohol dehydrogenase family. In terms of assembly, homotetramer. Zn(2+) is required as a cofactor.

The protein resides in the cytoplasm. It catalyses the reaction a primary alcohol + NAD(+) = an aldehyde + NADH + H(+). The catalysed reaction is a secondary alcohol + NAD(+) = a ketone + NADH + H(+). The chain is Alcohol dehydrogenase 1 (ADH1) from Kluyveromyces lactis (strain ATCC 8585 / CBS 2359 / DSM 70799 / NBRC 1267 / NRRL Y-1140 / WM37) (Yeast).